The primary structure comprises 515 residues: 2-isopropylmalate synthase (515 aa).

Residues 4–266 (IKFFDTTLRD…ETRLNLQEIK (263 aa)) enclose the Pyruvate carboxyltransferase domain. Positions 13, 201, 203, and 237 each coordinate Mn(2+). A regulatory domain region spans residues 391 to 515 (QLSSIQVQYG…RAENEKVATS (125 aa)).

Belongs to the alpha-IPM synthase/homocitrate synthase family. LeuA type 1 subfamily. Homodimer. Requires Mn(2+) as cofactor.

It localises to the cytoplasm. The enzyme catalyses 3-methyl-2-oxobutanoate + acetyl-CoA + H2O = (2S)-2-isopropylmalate + CoA + H(+). It participates in amino-acid biosynthesis; L-leucine biosynthesis; L-leucine from 3-methyl-2-oxobutanoate: step 1/4. In terms of biological role, catalyzes the condensation of the acetyl group of acetyl-CoA with 3-methyl-2-oxobutanoate (2-ketoisovalerate) to form 3-carboxy-3-hydroxy-4-methylpentanoate (2-isopropylmalate). In Geobacillus stearothermophilus (Bacillus stearothermophilus), this protein is 2-isopropylmalate synthase.